Consider the following 850-residue polypeptide: Protein stoned-A (850 aa).

Positions 1 to 16 (MLKLPKGLKKKKKKSK) are enriched in basic residues. Disordered regions lie at residues 1 to 95 (MLKL…AAGG) and 125 to 164 (KESF…LGQI). The segment at 26-290 (ELEQYKRDLK…QNLLLSESIE (265 aa)) is interaction with Syt. Residues 28–38 (EQYKRDLKAKQ) are compositionally biased toward basic and acidic residues. Residues 78–91 (ILNAQQQLSDQNQG) are compositionally biased toward polar residues. The span at 136–164 (AEKKKQKEEEAARLEAEQQEREKQRLGQI) shows a compositional bias: basic and acidic residues. The short motif at 224-226 (DPF) is the DPF 1 element. 2 disordered regions span residues 345–375 (EEEE…EEDD) and 412–498 (GSWA…PPFL). Residues 431 to 440 (PPPPVRPPTG) show a composition bias toward pro residues. Over residues 451-462 (SEDEEENPEDDP) the composition is skewed to acidic residues. 2 short sequence motifs (DPF) span residues 461 to 463 (DPF) and 535 to 537 (DPF). Disordered stretches follow at residues 573 to 610 (HSLS…QRKS), 634 to 673 (GNEL…TSHV), 738 to 760 (RKKL…FDTS), and 800 to 825 (LGLG…IDPF). 2 stretches are compositionally biased toward basic and acidic residues: residues 574–588 (SLSD…DQKE) and 596–607 (LEQKETDFDTAQ). 3 consecutive short sequence motifs (DPF) follow at residues 666–668 (DPF), 755–757 (DPF), and 823–825 (DPF).

Interacts with the second C2 domain of Syt.

Its subcellular location is the cytoplasm. It is found in the synapse. The protein localises to the cytoplasmic vesicle. It localises to the secretory vesicle. The protein resides in the synaptic vesicle. Adapter protein involved in endocytic recycling of synaptic vesicles membranes. May act by mediating the retrieval of synaptotagmin protein Syt from the plasma membrane, thereby facilitating the internalization of multiple synaptic vesicles from the plasma membrane. This chain is Protein stoned-A (stnA), found in Drosophila melanogaster (Fruit fly).